The following is a 325-amino-acid chain: Ribosomal RNA small subunit methyltransferase H (325 aa).

Residues 41–43 (GGH), Asp-60, Tyr-87, Asp-108, and Gln-115 each bind S-adenosyl-L-methionine. The disordered stretch occupies residues 295–325 (DDDEKAANPRAAPVRLRAAERTRASEDRRGS). Over residues 311–325 (RAAERTRASEDRRGS) the composition is skewed to basic and acidic residues.

This sequence belongs to the methyltransferase superfamily. RsmH family.

It is found in the cytoplasm. It catalyses the reaction cytidine(1402) in 16S rRNA + S-adenosyl-L-methionine = N(4)-methylcytidine(1402) in 16S rRNA + S-adenosyl-L-homocysteine + H(+). Functionally, specifically methylates the N4 position of cytidine in position 1402 (C1402) of 16S rRNA. The sequence is that of Ribosomal RNA small subunit methyltransferase H from Leifsonia xyli subsp. xyli (strain CTCB07).